The following is a 386-amino-acid chain: Probable dual-specificity RNA methyltransferase RlmN (386 aa).

Glutamate 123 acts as the Proton acceptor in catalysis. One can recognise a Radical SAM core domain in the interval 129 to 372 (YPTRTTLCIS…ATLRDTRGQD (244 aa)). Residues cysteine 136 and cysteine 377 are joined by a disulfide bond. [4Fe-4S] cluster is bound by residues cysteine 143, cysteine 147, and cysteine 150. Residues 198 to 199 (GE), serine 232, 255 to 257 (SLH), and asparagine 334 each bind S-adenosyl-L-methionine. Cysteine 377 serves as the catalytic S-methylcysteine intermediate.

Belongs to the radical SAM superfamily. RlmN family. [4Fe-4S] cluster is required as a cofactor.

Its subcellular location is the cytoplasm. It carries out the reaction adenosine(2503) in 23S rRNA + 2 reduced [2Fe-2S]-[ferredoxin] + 2 S-adenosyl-L-methionine = 2-methyladenosine(2503) in 23S rRNA + 5'-deoxyadenosine + L-methionine + 2 oxidized [2Fe-2S]-[ferredoxin] + S-adenosyl-L-homocysteine. It catalyses the reaction adenosine(37) in tRNA + 2 reduced [2Fe-2S]-[ferredoxin] + 2 S-adenosyl-L-methionine = 2-methyladenosine(37) in tRNA + 5'-deoxyadenosine + L-methionine + 2 oxidized [2Fe-2S]-[ferredoxin] + S-adenosyl-L-homocysteine. Specifically methylates position 2 of adenine 2503 in 23S rRNA and position 2 of adenine 37 in tRNAs. In Bifidobacterium adolescentis (strain ATCC 15703 / DSM 20083 / NCTC 11814 / E194a), this protein is Probable dual-specificity RNA methyltransferase RlmN.